A 338-amino-acid polypeptide reads, in one-letter code: Starch-binding domain-containing protein 1 (338 aa).

Residues 1–6 (MGAVWS) lie on the Extracellular side of the membrane. A helical transmembrane segment spans residues 7 to 23 (ALLVGGGLAGALILWLL). The Cytoplasmic portion of the chain corresponds to 24 to 338 (RGDSGAPGKD…KVVHGWWGIH (315 aa)). Disordered regions lie at residues 30–73 (PGKD…RELV) and 120–148 (KIPD…WRLP). Low complexity predominate over residues 36–52 (AEPPQKGAPPGEAAAPG). Residues 53–62 (DGPGGGGSGG) show a composition bias toward gly residues. Phosphoserine is present on Ser-68. Over residues 122–132 (PDTHSRADSEA) the composition is skewed to basic and acidic residues. Residues Ser-140, Ser-167, and Ser-179 each carry the phosphoserine modification. The LIR signature appears at 185-191 (HEDWEVV). Ser-195, Ser-196, Ser-205, Ser-209, Ser-212, Ser-220, and Ser-223 each carry phosphoserine. A CBM20 domain is found at 238 to 337 (SLKPQQVSIQ…DKVVHGWWGI (100 aa)).

Interacts with the ATG8 family proteins GABARAP and GABARAPL1. Interacts with several glycogen-associated proteins, such as GYS2 (liver glycogen synthase), GDE (glycogen debranching enzyme), GBE1 (glycogen branching enzyme 1) and EPM2A (Laforin). Post-translationally, ubiquitinated, which leads to proteasomal degradation. In terms of tissue distribution, expressed at high level in glycogen-accumulating organs such as muscle and liver. Trace signals are also found in brain, kidney, and pancreas.

The protein localises to the preautophagosomal structure membrane. Its subcellular location is the endoplasmic reticulum membrane. It localises to the cell membrane. It is found in the sarcolemma. The protein resides in the T-tubule. Acts as a cargo receptor for glycogen. Delivers its cargo to an autophagic pathway called glycophagy, resulting in the transport of glycogen to lysosomes. The sequence is that of Starch-binding domain-containing protein 1 from Mus musculus (Mouse).